Consider the following 81-residue polypeptide: MSGTTGERPFSDIVTSIRYWVIHSITIPMLFVAGWLFVSTGLAYDVFGTPRPDEYYTQERLELPILKDRYNTDQQIQEFNK.

A helical membrane pass occupies residues 21-35 (VIHSITIPMLFVAGW). His23 contributes to the heme binding site.

The protein belongs to the PsbE/PsbF family. As to quaternary structure, heterodimer of an alpha subunit and a beta subunit. PSII is composed of 1 copy each of membrane proteins PsbA, PsbB, PsbC, PsbD, PsbE, PsbF, PsbH, PsbI, PsbJ, PsbK, PsbL, PsbM, PsbT, PsbX, PsbY, PsbZ, Psb30/Ycf12, peripheral proteins PsbO, CyanoQ (PsbQ), PsbU, PsbV and a large number of cofactors. It forms dimeric complexes. It depends on heme b as a cofactor.

Its subcellular location is the cellular thylakoid membrane. Its function is as follows. This b-type cytochrome is tightly associated with the reaction center of photosystem II (PSII). PSII is a light-driven water:plastoquinone oxidoreductase that uses light energy to abstract electrons from H(2)O, generating O(2) and a proton gradient subsequently used for ATP formation. It consists of a core antenna complex that captures photons, and an electron transfer chain that converts photonic excitation into a charge separation. In Gloeothece citriformis (strain PCC 7424) (Cyanothece sp. (strain PCC 7424)), this protein is Cytochrome b559 subunit alpha.